Consider the following 256-residue polypeptide: Phosphatidylglycerol--prolipoprotein diacylglyceryl transferase (256 aa).

Helical transmembrane passes span 19-39, 56-76, and 91-111; these read VHWYGLMYLIGFIGAWLLGYW, LIFYSALGVILGGRVGYMLFY, and IWEGGMSFHGGLLGVVIAAWL. A 1,2-diacyl-sn-glycero-3-phospho-(1'-sn-glycerol) is bound at residue R139. The helical transmembrane segment at 231–251 threads the bilayer; it reads FGWLTMGQVLSIPMLLIGIWL.

The protein belongs to the Lgt family.

It localises to the cell inner membrane. The catalysed reaction is L-cysteinyl-[prolipoprotein] + a 1,2-diacyl-sn-glycero-3-phospho-(1'-sn-glycerol) = an S-1,2-diacyl-sn-glyceryl-L-cysteinyl-[prolipoprotein] + sn-glycerol 1-phosphate + H(+). The protein operates within protein modification; lipoprotein biosynthesis (diacylglyceryl transfer). Its function is as follows. Catalyzes the transfer of the diacylglyceryl group from phosphatidylglycerol to the sulfhydryl group of the N-terminal cysteine of a prolipoprotein, the first step in the formation of mature lipoproteins. This Legionella pneumophila (strain Paris) protein is Phosphatidylglycerol--prolipoprotein diacylglyceryl transferase.